The following is a 324-amino-acid chain: MKFGLFFLNFINSTTIQEQSIARMQEITEYVDKLNFEQILVCENHFSDNGVVGAPLTVSGFLLGLTEKIKIGSLNHVITTHHPVRIAEEACLLDQLSEGRFILGFSDCERKDEMPFFNRPEQYQQQLFEECYDIINDALTTGYCNPNGDFYNFPKISMNPHAYTQNGPRKYVTATSCHVVEWAAKKGIPLIFKWDDSNEVKHEYAKRYQAIAGEYGVDLAEIDHQLMILVNYSEDSEKAKEETRAFISDYILAMHPNENFEKKLEEIITENSVGDYMECTTAAKLAMEKCGTKGILLSFESMSDFTHQINAIDIVNDNIKKYHM.

It belongs to the bacterial luciferase oxidoreductase family. In terms of assembly, heterodimer of an alpha and a beta chain.

It carries out the reaction a long-chain fatty aldehyde + FMNH2 + O2 = a long-chain fatty acid + hnu + FMN + H2O + 2 H(+). Light-emitting reaction in luminous bacteria. The specific role of the beta subunit is unknown, but it is absolutely required for bioluminescence activity. The chain is Alkanal monooxygenase beta chain (luxB) from Photorhabdus luminescens (Xenorhabdus luminescens).